Here is a 181-residue protein sequence, read N- to C-terminus: ECF RNA polymerase sigma factor RpoE (181 aa).

The tract at residues 29-96 is sigma-70 factor domain-2; that stretch reads LFQHFAPKVK…RRIDGLRKDR (68 aa). Positions 53-56 match the Interaction with polymerase core subunit RpoC motif; that stretch reads ECAQ. The segment at 129–178 is sigma-70 factor domain-4; it reads AIARLPEAQRALIERAFFGDLTHRELAAETGLPLGTIKSRIRLALDRLRQ. The segment at residues 151 to 170 is a DNA-binding region (H-T-H motif); that stretch reads HRELAAETGLPLGTIKSRIR.

Belongs to the sigma-70 factor family. ECF subfamily. As to quaternary structure, interacts transiently with the RNA polymerase catalytic core formed by RpoA, RpoB, RpoC and RpoZ (2 alpha, 1 beta, 1 beta' and 1 omega subunit) to form the RNA polymerase holoenzyme that can initiate transcription. Forms a 1:1 complex (via sigma-70 factor domain 4) with anti-sigma factor ChrR; this inhibits the interaction of RpoE with the RNA polymerase catalytic core.

Its function is as follows. Sigma factors are initiation factors that promote the attachment of RNA polymerase to specific initiation sites and are then released. Extracytoplasmic function (ECF) sigma factors are held in an inactive form by a cognate anti-sigma factor until released. Sigma-E controls a transcriptional response to singlet oxygen, a by-product of photosynthesis; its continuous activity requires constant exposure to singlet oxygen. The regulon has about 180 genes that protect against or repair damage induced by singlet oxygen, including itself and rpoH2, a heat shock-responsive sigma factor. The polypeptide is ECF RNA polymerase sigma factor RpoE (rpoE) (Cereibacter sphaeroides (strain ATCC 17023 / DSM 158 / JCM 6121 / CCUG 31486 / LMG 2827 / NBRC 12203 / NCIMB 8253 / ATH 2.4.1.) (Rhodobacter sphaeroides)).